The sequence spans 364 residues: Dihydroorotate dehydrogenase (quinone) (364 aa).

FMN contacts are provided by residues 61 to 65 (AGYDK) and T85. K65 is a substrate binding site. 110–114 (NRLGF) contributes to the substrate binding site. Residues N139 and N170 each contribute to the FMN site. N170 is a binding site for substrate. The active-site Nucleophile is S173. N175 is a binding site for substrate. Residues K215 and S243 each contribute to the FMN site. 244–245 (NT) contacts substrate. Residues G266, G295, and 316–317 (YS) contribute to the FMN site.

This sequence belongs to the dihydroorotate dehydrogenase family. Type 2 subfamily. In terms of assembly, monomer. Requires FMN as cofactor.

It is found in the cell membrane. The catalysed reaction is (S)-dihydroorotate + a quinone = orotate + a quinol. It functions in the pathway pyrimidine metabolism; UMP biosynthesis via de novo pathway; orotate from (S)-dihydroorotate (quinone route): step 1/1. Its function is as follows. Catalyzes the conversion of dihydroorotate to orotate with quinone as electron acceptor. This is Dihydroorotate dehydrogenase (quinone) from Brucella melitensis biotype 2 (strain ATCC 23457).